The sequence spans 601 residues: Putative ankyrin repeat protein R841 (601 aa).

ANK repeat units lie at residues 17–50 (NNITSLMLAVSNYEIHDNYDTVKSLIDCGFDVNA), 54–86 (HGKSVLMYAINIDSDKNINVIKLLIDHGADVNH), 91–123 (QRSVLIHTCMYMEYGYNNKTISLLIDKGANINY), 165–197 (RENILMRIIKKLDNKYSITTIKLLLEHGINIDH), 201–234 (YGQTALMYACIYINGLKNIPIIKLLLEYGANINS), 238–269 (KGWSPLMSVFKNDIIDIKTIKFLVEKGAEINS), 274–310 (NETMLYVFCKKLSTRIYGQACVKIFDFLIKKGISIDN), 314–349 (KGYTPLMAFIIKISEYNEYTEKFIKLLLDYGANINS), 361–390 (VCCDVVSGSVSHCKIEIINTLIKYGADVNS), 397–427 (TILMNLRYSIHSENYITVLEILLRNGANPNI), 432–463 (YHKFPLLIDILNRGGELRIIKLMLQYNIDPNI), and 467–500 (IGNNALLFVAKHYKKNERFSFLKLLLTYGASYNC).

The polypeptide is Putative ankyrin repeat protein R841 (Acanthamoeba polyphaga mimivirus (APMV)).